Reading from the N-terminus, the 433-residue chain is Voltage-gated potassium channel regulatory subunit KCNG3 (433 aa).

The Cytoplasmic portion of the chain corresponds to 1 to 165; it reads MTFGRGGAAS…RTFEEPTSSL (165 aa). Residues 166 to 187 traverse the membrane as a helical segment; the sequence is AAQILASVSVVFVIVSMVVLCA. Topologically, residues 188–217 are extracellular; the sequence is STLPDWRAAVADNRSLDDRSRYSASPGREP. Residues 218-239 traverse the membrane as a helical segment; it reads SGIIEAICIGWFTAECIVRFIV. Residues 240–250 lie on the Cytoplasmic side of the membrane; sequence SKNKCEFVKRP. Residues 251 to 271 form a helical membrane-spanning segment; it reads LNIIDLLAITPYYISVLMTVF. The Extracellular portion of the chain corresponds to 272-281; sequence TGENSQLQRA. Residues 282–302 form a helical; Voltage-sensor membrane-spanning segment; sequence GVTLRVLRMMRIFWVIKLARH. At 303–317 the chain is on the cytoplasmic side; sequence FIGLQTLGLTLKRCY. A helical membrane pass occupies residues 318-339; it reads REMAMLLVFICVAMAIFSALSQ. The Extracellular segment spans residues 340–357; that stretch reads LLEHGLDLETSNKDFASI. Positions 358-369 form an intramembrane region, helical; the sequence is PAACWWVIISMT. The Selectivity filter signature appears at 370-375; it reads TVGYGD. An intramembrane segment occupies 370–377; that stretch reads TVGYGDMY. Residues 378 to 384 are Extracellular-facing; that stretch reads PITVPGR. The helical transmembrane segment at 385 to 413 threads the bilayer; that stretch reads ILGGVCVVSGIVLLALPITFIYHSFVQCY. Residues 414–433 are Cytoplasmic-facing; it reads HELKFRSARYSRSLSAEFLN.

Belongs to the potassium channel family. G (TC 1.A.1.2) subfamily. Kv6.3/KCNG3 sub-subfamily. In terms of assembly, heterotetramer with KCNB1. Does not form homomultimers.

It localises to the cell membrane. The protein localises to the cytoplasm. Functionally, regulatory subunit of the voltage-gated potassium (Kv) channel which, when coassembled with KCNB1, modulates the kinetics parameters of the heterotetrameric channel namely the inactivation and deactivation rate. Potassium channel subunit that does not form functional channels by itself. Reduces the deactivation rate. Moderately acceleratee activation. The protein is Voltage-gated potassium channel regulatory subunit KCNG3 of Mus musculus (Mouse).